The sequence spans 505 residues: Serine carboxypeptidase-like 47 (505 aa).

Positions 1–22 (MEAKTFFLFMLFIFSQSWLSTS) are cleaved as a signal peptide. N-linked (GlcNAc...) asparagine glycosylation is found at Asn-37, Asn-86, and Asn-122. Intrachain disulfides connect Cys-138–Cys-378, Cys-306–Cys-321, and Cys-344–Cys-349. Residue Ser-228 is part of the active site. An N-linked (GlcNAc...) asparagine glycan is attached at Asn-301. Asp-416 is a catalytic residue. 2 N-linked (GlcNAc...) asparagine glycosylation sites follow: Asn-432 and Asn-444. His-473 is a catalytic residue.

This sequence belongs to the peptidase S10 family. In terms of tissue distribution, expressed in roots, flowers and siliques.

It is found in the secreted. Functionally, probable carboxypeptidase. The sequence is that of Serine carboxypeptidase-like 47 (SCPL47) from Arabidopsis thaliana (Mouse-ear cress).